The chain runs to 419 residues: Synaptosomal-associated protein 47 (419 aa).

T-SNARE coiled-coil homology domains follow at residues 108–170 and 356–418; these read PQGA…LSEL and VLQP…MRKL.

This sequence belongs to the SVAP1 family.

Functionally, may play a role in intracellular membrane fusion. This Danio rerio (Zebrafish) protein is Synaptosomal-associated protein 47 (snap47).